The sequence spans 331 residues: Hyaluronidase B (331 aa).

Intrachain disulfides connect Cys-19–Cys-308 and Cys-185–Cys-197. N-linked (GlcNAc...) asparagine glycosylation occurs at Asn-79. The active-site Proton donor is the Glu-109.

Belongs to the glycosyl hydrolase 56 family. As to expression, expressed by the venom gland.

The protein resides in the secreted. It carries out the reaction Random hydrolysis of (1-&gt;4)-linkages between N-acetyl-beta-D-glucosamine and D-glucuronate residues in hyaluronate.. Hydrolyzes high molecular weight hyaluronic acid to produce small oligosaccharides. In Vespa velutina (Asian yellow-legged hornet), this protein is Hyaluronidase B.